A 130-amino-acid chain; its full sequence is Glycoprotein hormone alpha-2 (130 aa).

Positions 1–22 (MPMAPRVLLFCLLGLAVTEGHG) are cleaved as a signal peptide. Intrachain disulfides connect C32-C90, C49-C104, C58-C120, and C62-C122. 2 N-linked (GlcNAc...) asparagine glycosylation sites follow: N38 and N82.

The protein belongs to the glycoprotein hormones subunit alpha family. In terms of assembly, heterodimer with GPHB5; this heterodimer interacts with thyroid-stimulating hormone receptor (TSHR), and hence stimulates cAMP production.

It localises to the secreted. Functionally, functions as a heterodimeric glycoprotein hormone with GPHB5 able to bind and activate the thyroid-stimulating hormone receptor (TSHR), leading to increased cAMP production. Plays a central role in controlling thyroid cell metabolism. This is Glycoprotein hormone alpha-2 (Gpha2) from Rattus norvegicus (Rat).